The sequence spans 228 residues: Protein GrpE (228 aa).

Basic and acidic residues predominate over residues 1–22 (MDDKQKTNEEVKASSFDSEKSS). A disordered region spans residues 1 to 71 (MDDKQKTNEE…DQTNTNNNEL (71 aa)). The span at 38 to 53 (QNVQHDNGSNPAQKQN) shows a compositional bias: polar residues.

It belongs to the GrpE family. In terms of assembly, homodimer.

The protein resides in the cytoplasm. Participates actively in the response to hyperosmotic and heat shock by preventing the aggregation of stress-denatured proteins, in association with DnaK and GrpE. It is the nucleotide exchange factor for DnaK and may function as a thermosensor. Unfolded proteins bind initially to DnaJ; upon interaction with the DnaJ-bound protein, DnaK hydrolyzes its bound ATP, resulting in the formation of a stable complex. GrpE releases ADP from DnaK; ATP binding to DnaK triggers the release of the substrate protein, thus completing the reaction cycle. Several rounds of ATP-dependent interactions between DnaJ, DnaK and GrpE are required for fully efficient folding. This chain is Protein GrpE, found in Coprothermobacter proteolyticus (strain ATCC 35245 / DSM 5265 / OCM 4 / BT).